The following is a 250-amino-acid chain: ADPR responsive transcriptional repressor NtrR (250 aa).

A Nudix hydrolase domain is found at 26-157 (LMTVDMAIFS…DHHDLLQQAF (132 aa)). Positions 62–85 (GFVDLEQDQNLMACAHRKLLEKTG) match the Nudix box motif. A winged helix-like DNA-binding region region spans residues 164–237 (TRYTALPISL…RFALQDYDFN (74 aa)).

DNA binding is efficiently suppressed in the presence of ADP-ribose (ADPR) or phospho-ADPR. Accumulation of ADPR resulting from NAD degradation may be interpreted by the cell as a signal to activate recycling of nicotinamide. Functionally, involved in the transcriptional regulation of the nondeamidating salvage pathway for production of NAD from nicotinamide. Represses expression of the prs-nadV-nrtR operon by binding to the DNA region located upstream of the operon, thus blocking the nondeamidating pathway. This Acinetobacter baylyi (strain ATCC 33305 / BD413 / ADP1) protein is ADPR responsive transcriptional repressor NtrR.